The chain runs to 173 residues: Transcriptional regulator ERG homolog (173 aa).

Positions 1-84 (SGQIQLWQFL…HGKRYAYKFD (84 aa)) form a DNA-binding region, ETS.

It belongs to the ETS family.

It localises to the nucleus. Its function is as follows. Acts as a transcriptional activator. This is Transcriptional regulator ERG homolog (ERG) from Lytechinus variegatus (Green sea urchin).